The chain runs to 355 residues: MPSLGQRETQVLATIIESYIASASPVGSRAVAEHSGLHLSPASMRATMSDLTDLGYLEQPHTSAGRVPTARAFRLYVDSLLRPLPLGSAERDAIADELSRQELEISGILRRAANLLSGHARQLGMVVAPSEDEARWRSIEFAPAAEGLVLAVLMLEGGLVRTRTVRVDERYGQDELVRFGNYLNEHFRGLSLSEARDRIGHELARAGSRLEEMCVRALALSRRAVEHMGDDRELIVNGTLNMLDHAEFTDVGRMRDLLAAIEERSRLLELLDRTLSERDVRITFCQDVADGAPDGLRGCSVISAAYGGDTPRGVVSVVGPLRMDYAKIVPVVQCVSRALTQLFRERFAAAPCRLP.

The protein belongs to the HrcA family.

Functionally, negative regulator of class I heat shock genes (grpE-dnaK-dnaJ and groELS operons). Prevents heat-shock induction of these operons. This Nitratidesulfovibrio vulgaris (strain DSM 19637 / Miyazaki F) (Desulfovibrio vulgaris) protein is Heat-inducible transcription repressor HrcA.